The primary structure comprises 393 residues: Proteasome-activating nucleotidase (393 aa).

The stretch at 15 to 53 (DEVQLVRLLEEKIKSLQIEIENLRKELNYYKAEMEKMLS) forms a coiled coil. ATP-binding positions include 178–183 (GTGKTM) and Tyr317. A coiled-coil region spans residues 365–393 (MNDLVEAINKINVKRNKMESMKERREKYS). Positions 391 to 393 (KYS) are docks into pockets in the proteasome alpha-ring to cause gate opening.

This sequence belongs to the AAA ATPase family. As to quaternary structure, homohexamer. The hexameric complex has a two-ring architecture resembling a top hat that caps the 20S proteasome core at one or both ends. Upon ATP-binding, the C-terminus of PAN interacts with the alpha-rings of the proteasome core by binding to the intersubunit pockets.

It is found in the cytoplasm. ATPase which is responsible for recognizing, binding, unfolding and translocation of substrate proteins into the archaeal 20S proteasome core particle. Is essential for opening the gate of the 20S proteasome via an interaction with its C-terminus, thereby allowing substrate entry and access to the site of proteolysis. Thus, the C-termini of the proteasomal ATPase function like a 'key in a lock' to induce gate opening and therefore regulate proteolysis. Unfolding activity requires energy from ATP hydrolysis, whereas ATP binding alone promotes ATPase-20S proteasome association which triggers gate opening, and supports translocation of unfolded substrates. In Saccharolobus solfataricus (strain ATCC 35092 / DSM 1617 / JCM 11322 / P2) (Sulfolobus solfataricus), this protein is Proteasome-activating nucleotidase.